We begin with the raw amino-acid sequence, 732 residues long: MSSPGNSGVAIDSTVLKAIELGTRLFKSGEYLQAKRIFTNALRVCDSYSQEQIMRIRNAYQLDTARPDNKRLYHPRYIKILDNICACYEKLNDLKSCLDVSQRLLKLEPGNIKCYIRCTRTLIKLKDWKRAYKTCSRGLQLCNNDSNHLRQQKQFIKNNMVQKQDGKRSYIDPLEETKIAKKKKNNNVLESLPKKKIKGSTKKTDLVGNLPIEILPIIFQRFTTKELVTLSLVCNKWRDKILYHLDCFQEFNLAPINFKNFVKFMDFLQQNFTRTYRKYILSQVKVSSRITSEELRITQLLFSKMPKCINIERLILSMPTLTTTQIFKLMVRGGTDFFTRLLELSLMITYRPDKQHELEILQTCPLLKKIELIFVNSLVPIFDGNNSVGRDGSFNVMARHTNMQISTADNDEQGIVEEKVIYSELEKITLICDKKKIKNFPLCRALLRGQFPLLQKLTITGVTFPMNNQDIMNFQWLLNFPDLKELWIEDNDNCELSKFLQLLKFSNVWKNLEKLTFRENKLYPIVNLDEDQPVTNDDEVPSMLFYKENLQNLEKLDLMGTSISGSALTRLCEQEYLDGRKLRSLNIGNCPNIQFPNNHAHTARMILDVNAVLKRLSKLEEINLSHLSSLNDSTMKSFIINVPFLENLKRLDISHNFEITGISIYEFLKKFQMDHDNEAGGQPLAYLNIDGCSQVSHITVNMIRAQNLVTQVDCVYERDVWRKFGINSYSYS.

3 TPR repeats span residues 15–48 (VLKA…CDSY), 78–111 (IKIL…EPGN), and 113–145 (KCYI…CNND). Residues 204–251 (TDLVGNLPIEILPIIFQRFTTKELVTLSLVCNKWRDKILYHLDCFQEF) enclose the F-box domain. Phosphoserine is present on Ser393. 7 LRR repeats span residues 425 to 449 (LEKI…LLRG), 480 to 505 (FPDL…LLKF), 509 to 532 (WKNL…DEDQ), 550 to 574 (LQNL…LCEQ), 579 to 602 (GRKL…HAHT), 616 to 637 (LSKL…TMKS), and 645 to 669 (LENL…EFLK).

It belongs to the DIA2 family. As to quaternary structure, component of the SCF(DIA2) complex containing CDC53, SKP1, RBX1 and DIA2. Interacts with SKP1.

It is found in the nucleus. Its function is as follows. F-box protein component of a SCF (SKP1-CUL1-F-box protein) E3 ubiquitin-protein ligase complex which mediates the ubiquitination and subsequent proteasomal degradation of target proteins. Probably recognizes and binds to phosphorylated target proteins. The SCF(DIA2) complex is specifically involved in the pheromone induced degradation of phosphorylated TEC1. The SCF(DIA2) complex binds to DNA replication origins. Involved in DNA replication, genome stability, and the control of cell cycle, probably through its association to replication origins to facilitate the ubiquitination of another origin-binding protein. Required for invasive growth and growth under alkaline conditions. The polypeptide is Protein DIA2 (DIA2) (Saccharomyces cerevisiae (strain ATCC 204508 / S288c) (Baker's yeast)).